The sequence spans 476 residues: tRNA(Ile)-lysidine synthase (476 aa).

26-31 (SGGSDS) serves as a coordination point for ATP.

The protein belongs to the tRNA(Ile)-lysidine synthase family.

The protein localises to the cytoplasm. It catalyses the reaction cytidine(34) in tRNA(Ile2) + L-lysine + ATP = lysidine(34) in tRNA(Ile2) + AMP + diphosphate + H(+). Functionally, ligates lysine onto the cytidine present at position 34 of the AUA codon-specific tRNA(Ile) that contains the anticodon CAU, in an ATP-dependent manner. Cytidine is converted to lysidine, thus changing the amino acid specificity of the tRNA from methionine to isoleucine. This Bartonella quintana (strain Toulouse) (Rochalimaea quintana) protein is tRNA(Ile)-lysidine synthase.